Here is a 147-residue protein sequence, read N- to C-terminus: Myoglobin (147 aa).

Residues 2–141 enclose the Globin domain; the sequence is HDAELVLKCW…VIGDIDTYYK (140 aa). Residue His60 participates in nitrite binding. Position 60 (His60) interacts with O2. His89 serves as a coordination point for heme b.

The protein belongs to the globin family. In terms of assembly, monomeric.

Its subcellular location is the cytoplasm. The protein localises to the sarcoplasm. The catalysed reaction is Fe(III)-heme b-[protein] + nitric oxide + H2O = Fe(II)-heme b-[protein] + nitrite + 2 H(+). It carries out the reaction H2O2 + AH2 = A + 2 H2O. In terms of biological role, monomeric heme protein which primary function is to store oxygen and facilitate its diffusion within muscle tissues. Reversibly binds oxygen through a pentacoordinated heme iron and enables its timely and efficient release as needed during periods of heightened demand. Depending on the oxidative conditions of tissues and cells, and in addition to its ability to bind oxygen, it also has a nitrite reductase activity whereby it regulates the production of bioactive nitric oxide. Under stress conditions, like hypoxia and anoxia, it also protects cells against reactive oxygen species thanks to its pseudoperoxidase activity. The protein is Myoglobin (mb) of Cyprinus carpio (Common carp).